The primary structure comprises 228 residues: Rab-like protein 2A (228 aa).

GTP contacts are provided by residues 28 to 35 (GDSAVGKS), 76 to 80 (DTAGQ), and 133 to 136 (NKID). The disordered stretch occupies residues 200–228 (LEQEEEDVPDQEQSSSIETPSEEVASPHS).

The protein belongs to the small GTPase superfamily. Rab family. As to quaternary structure, interacts with IFT27, IFT81, IFT172, ATP6V1E1, HK1, LDHC, MAPRE1 and HSPA2. In terms of tissue distribution, expressed in the testis.

Its function is as follows. Plays an essential role in male fertility, sperm intra-flagellar transport, and tail assembly. Binds, in a GTP-regulated manner, to a specific set of effector proteins including key proteins involved in cilia development and function and delivers them into the growing sperm tail. This chain is Rab-like protein 2A (RABL2A), found in Homo sapiens (Human).